A 278-amino-acid chain; its full sequence is Glutamate racemase (278 aa).

Residues 25-26 and 57-58 each bind substrate; these read DS and YG. Catalysis depends on Cys89, which acts as the Proton donor/acceptor. Residue 90 to 91 coordinates substrate; the sequence is NT. Catalysis depends on Cys204, which acts as the Proton donor/acceptor. 205-206 is a substrate binding site; it reads TH.

The protein belongs to the aspartate/glutamate racemases family.

It catalyses the reaction L-glutamate = D-glutamate. Its pathway is cell wall biogenesis; peptidoglycan biosynthesis. Provides the (R)-glutamate required for cell wall biosynthesis. This Brucella anthropi (strain ATCC 49188 / DSM 6882 / CCUG 24695 / JCM 21032 / LMG 3331 / NBRC 15819 / NCTC 12168 / Alc 37) (Ochrobactrum anthropi) protein is Glutamate racemase.